We begin with the raw amino-acid sequence, 477 residues long: PEP-dependent dihydroxyacetone kinase, phosphoryl donor subunit DhaM (477 aa).

The PTS EIIA type-4 domain occupies 1 to 135 (MIGLIIVSHS…QALQAKQQQL (135 aa)). His-9 serves as the catalytic Tele-phosphohistidine intermediate. The HPr domain maps to 156 to 243 (ALTTQWVVKN…QLAQHNFGDN (88 aa)). Residue His-170 is the Pros-phosphohistidine intermediate of the active site. Positions 269-477 (HAPNTELCIS…IETRSLIVAS (209 aa)) are PTS EI-like, N-terminal part. Catalysis depends on His-435, which acts as the Tele-phosphohistidine intermediate.

Belongs to the PEP-utilizing enzyme family. Homodimer. The dihydroxyacetone kinase complex is composed of a homodimer of DhaM, a homodimer of DhaK and the subunit DhaL.

The enzyme catalyses dihydroxyacetone + phosphoenolpyruvate = dihydroxyacetone phosphate + pyruvate. In terms of biological role, component of the dihydroxyacetone kinase complex, which is responsible for the phosphoenolpyruvate (PEP)-dependent phosphorylation of dihydroxyacetone. DhaM serves as the phosphoryl donor. Is phosphorylated by phosphoenolpyruvate in an EI- and HPr-dependent reaction, and a phosphorelay system on histidine residues finally leads to phosphoryl transfer to DhaL and dihydroxyacetone. This is PEP-dependent dihydroxyacetone kinase, phosphoryl donor subunit DhaM from Providencia stuartii (strain MRSN 2154).